The primary structure comprises 179 residues: uncharacterized protein (179 aa).

The tract at residues 53–82 is disordered; that stretch reads SPEREDPESPTRGVDEVDGACSEPPTPRPE. Basic and acidic residues predominate over residues 54 to 67; it reads PEREDPESPTRGVD.

This is an uncharacterized protein from Ictaluridae (bullhead catfishes).